We begin with the raw amino-acid sequence, 776 residues long: Calcium-independent phospholipase A2-gamma (776 aa).

2 stretches are compositionally biased toward basic and acidic residues: residues 226–238 (RQLQ…EESK) and 307–331 (LKSD…ICKD). 2 disordered regions span residues 226-274 (RQLQ…EALP) and 306-331 (KLKS…ICKD). A PNPLA domain is found at 439–634 (LAIDGGGTRG…LLNNPSALAL (196 aa)). A GXGXXG motif is present at residues 443–448 (GGGTRG). The helical transmembrane segment at 469–489 (LFDYICGVSTGAILAFMLGLF) threads the bilayer. The GXSXG signature appears at 475–479 (GVSTG). The active-site Nucleophile is Ser-477. Catalysis depends on Asp-621, which acts as the Proton acceptor. A DGA/G motif is present at residues 621–623 (DGG). Lys-730 bears the N6-succinyllysine mark.

The protein localises to the endoplasmic reticulum membrane. It is found in the microsome membrane. Its subcellular location is the mitochondrion membrane. The protein resides in the peroxisome membrane. It catalyses the reaction a 1,2-diacyl-sn-glycero-3-phosphocholine + H2O = a 1-acyl-sn-glycero-3-phosphocholine + a fatty acid + H(+). The catalysed reaction is a 1,2-diacyl-sn-glycero-3-phosphocholine + H2O = a 2-acyl-sn-glycero-3-phosphocholine + a fatty acid + H(+). The enzyme catalyses a 1,2-diacyl-sn-glycero-3-phosphoethanolamine + H2O = a 1-acyl-sn-glycero-3-phosphoethanolamine + a fatty acid + H(+). It carries out the reaction a 1-O-(1Z-alkenyl)-2-acyl-sn-glycero-3-phosphocholine + H2O = a 1-O-(1Z-alkenyl)-sn-glycero-3-phosphocholine + a fatty acid + H(+). It catalyses the reaction a 1-acyl-sn-glycero-3-phosphocholine + H2O = sn-glycerol 3-phosphocholine + a fatty acid + H(+). The catalysed reaction is 1-acyl-2-(9Z,12Z)-octadecadienoyl-sn-glycero-3-phosphocholine + H2O = a 1-acyl-sn-glycero-3-phosphocholine + (9Z,12Z)-octadecadienoate + H(+). The enzyme catalyses 1-acyl-2-(5Z,8Z,11Z,14Z-eicosatetraenoyl)-sn-glycero-3-phosphocholine + H2O = a 1-acyl-sn-glycero-3-phosphocholine + (5Z,8Z,11Z,14Z)-eicosatetraenoate + H(+). It carries out the reaction 1-hexadecanoyl-2-(5Z,8Z,11Z,14Z-eicosatetraenoyl)-sn-glycero-3-phosphocholine + H2O = 1-hexadecanoyl-sn-glycero-3-phosphocholine + (5Z,8Z,11Z,14Z)-eicosatetraenoate + H(+). It catalyses the reaction 1-octadecanoyl-2-(9Z-octadecenoyl)-sn-glycero-3-phosphocholine + H2O = 1-octadecanoyl-sn-glycero-3-phosphocholine + (9Z)-octadecenoate + H(+). The catalysed reaction is 1-hexadecanoyl-2-(9Z-octadecenoyl)-sn-glycero-3-phosphocholine + H2O = 1-hexadecanoyl-sn-glycero-3-phosphocholine + (9Z)-octadecenoate + H(+). The enzyme catalyses 1-hexadecanoyl-2-(9Z,12Z-octadecadienoyl)-sn-glycero-3-phosphocholine + H2O = (9Z,12Z)-octadecadienoate + 1-hexadecanoyl-sn-glycero-3-phosphocholine + H(+). It carries out the reaction 1-acyl-2-(9Z,12Z)-octadecadienoyl-sn-glycero-3-phosphoethanolamine + H2O = a 1-acyl-sn-glycero-3-phosphoethanolamine + (9Z,12Z)-octadecadienoate + H(+). It catalyses the reaction 1-acyl-2-(5Z,8Z,11Z,14Z)-eicosatetraenoyl-sn-glycero-3-phosphoethanolamine + H2O = a 1-acyl-sn-glycero-3-phosphoethanolamine + (5Z,8Z,11Z,14Z)-eicosatetraenoate + H(+). The catalysed reaction is 1-hexadecanoyl-2-(5Z,8Z,11Z,14Z-eicosatetraenoyl)-sn-glycero-3-phosphoethanolamine + H2O = 1-hexadecanoyl-sn-glycero-3-phosphoethanolamine + (5Z,8Z,11Z,14Z)-eicosatetraenoate + H(+). The enzyme catalyses 1-hexadecanoyl-2-(5Z,8Z,11Z,14Z-eicosatetraenoyl)-sn-glycero-3-phosphocholine + H2O = 2-(5Z,8Z,11Z,14Z)-eicosatetraenoyl-sn-glycero-3-phosphocholine + hexadecanoate + H(+). It carries out the reaction 1-octadecanoyl-2-(9Z-octadecenoyl)-sn-glycero-3-phosphocholine + H2O = 2-(9Z-octadecenoyl)-sn-glycero-3-phosphocholine + octadecanoate + H(+). It catalyses the reaction 1-hexadecanoyl-2-(4Z,7Z,10Z,13Z,16Z,19Z-docosahexaenoyl)-sn-glycero-3-phosphocholine + H2O = 2-(4Z,7Z,10Z,13Z,16Z,19Z-docosahexaenoyl)-sn-glycero-3-phosphocholine + hexadecanoate + H(+). The catalysed reaction is 1-O-(1Z)-hexadecenyl-2 (5Z,8Z,11Z,14Z)-eicosatetraenoyl-sn-glycero-3-phosphocholine + H2O = 1-(1Z-hexadecenyl)-sn-glycero-3-phosphocholine + (5Z,8Z,11Z,14Z)-eicosatetraenoate + H(+). The enzyme catalyses 1-O-(1Z-hexadecenyl)-2-(9Z-octadecenoyl)-sn-glycero-3-phosphocholine + H2O = 1-(1Z-hexadecenyl)-sn-glycero-3-phosphocholine + (9Z)-octadecenoate + H(+). It carries out the reaction 1-hexadecanoyl-sn-glycero-3-phosphocholine + H2O = sn-glycerol 3-phosphocholine + hexadecanoate + H(+). It catalyses the reaction 1',3'-bis-[1,2-di-(9Z,12Z-octadecadienoyl)-sn-glycero-3-phospho]-glycerol + H2O = 1'-[1,2-di-(9Z,12Z-octadecadienoyl)-sn-glycero-3-phospho]-3'-[1-(9Z,12Z-octadecadienoyl)-sn-glycero-3-phospho]-glycerol + (9Z,12Z)-octadecadienoate + H(+). The catalysed reaction is 1'-[1-acyl-2-(9-hydroxy-(10E,12Z)-octadecadienoyl)-sn-glycero-3-phospho]-3'-[1,2-diacyl-sn-glycero-3-phospho]-glycerol + H2O = 9-hydroxy-(10E,12Z)-octadecadienoate + 1'-[1,2-diacyl-sn-glycero-3-phospho],3'-[1-acyl-sn-glycero-3-phospho]-glycerol + H(+). It participates in phospholipid metabolism. Its activity is regulated as follows. Calcium-independent phospholipase. In terms of biological role, calcium-independent and membrane-bound phospholipase, that catalyzes the esterolytic cleavage of fatty acids from glycerophospholipids to yield free fatty acids and lysophospholipids, hence regulating membrane physical properties and the release of lipid second messengers and growth factors. Hydrolyzes phosphatidylethanolamine, phosphatidylcholine and probably phosphatidylinositol with a possible preference for the former. Has also a broad substrate specificity in terms of fatty acid moieties, hydrolyzing saturated and mono-unsaturated fatty acids at nearly equal rates from either the sn-1 or sn-2 position in diacyl phosphatidylcholine. However, has a weak activity toward polyunsaturated fatty acids at the sn-2 position, and thereby favors the production of 2-arachidonoyl lysophosphatidylcholine, a key branch point metabolite in eicosanoid signaling. On the other hand, can produce arachidonic acid from the sn-1 position of diacyl phospholipid and from the sn-2 position of arachidonate-containing plasmalogen substrates. Therefore, plays an important role in the mobilization of arachidonic acid in response to cellular stimuli and the generation of lipid second messengers. Can also hydrolyze lysophosphatidylcholine. In the mitochondrial compartment, catalyzes the hydrolysis and release of oxidized aliphatic chains from cardiolipin and integrates mitochondrial bioenergetics and signaling. It is essential for maintaining efficient bioenergetic mitochondrial function through tailoring mitochondrial membrane lipid metabolism and composition. This Rattus norvegicus (Rat) protein is Calcium-independent phospholipase A2-gamma.